The primary structure comprises 134 residues: Cytochrome b5 (134 aa).

At Ala2 the chain carries N-acetylalanine. N6-acetyllysine is present on residues Lys7, Lys10, and Lys19. Residues Val9 to His85 enclose the Cytochrome b5 heme-binding domain. Residues His44 and His68 each coordinate heme. Residues Trp109–Met131 traverse the membrane as a helical segment.

This sequence belongs to the cytochrome b5 family.

Its subcellular location is the endoplasmic reticulum membrane. It is found in the microsome membrane. Cytochrome b5 is a membrane-bound hemoprotein functioning as an electron carrier for several membrane-bound oxygenases. It is also involved in several steps of the sterol biosynthesis pathway, particularly in the C-5 double bond introduction during the C-5 desaturation. This Mus musculus (Mouse) protein is Cytochrome b5 (Cyb5a).